Consider the following 364-residue polypeptide: 3-isopropylmalate dehydrogenase (364 aa).

79-92 (GPKWEHLPAAEQPE) contacts NAD(+). 4 residues coordinate substrate: arginine 100, arginine 110, arginine 139, and aspartate 228. Mg(2+)-binding residues include aspartate 228, aspartate 252, and aspartate 256. 286 to 298 (GSAPDIAGKDIAN) contributes to the NAD(+) binding site.

This sequence belongs to the isocitrate and isopropylmalate dehydrogenases family. LeuB type 1 subfamily. In terms of assembly, homodimer. The cofactor is Mg(2+). Mn(2+) is required as a cofactor.

Its subcellular location is the cytoplasm. The enzyme catalyses (2R,3S)-3-isopropylmalate + NAD(+) = 4-methyl-2-oxopentanoate + CO2 + NADH. It functions in the pathway amino-acid biosynthesis; L-leucine biosynthesis; L-leucine from 3-methyl-2-oxobutanoate: step 3/4. In terms of biological role, catalyzes the oxidation of 3-carboxy-2-hydroxy-4-methylpentanoate (3-isopropylmalate) to 3-carboxy-4-methyl-2-oxopentanoate. The product decarboxylates to 4-methyl-2 oxopentanoate. In Sodalis glossinidius (strain morsitans), this protein is 3-isopropylmalate dehydrogenase.